Consider the following 428-residue polypeptide: Putative POM121-like protein 1 (428 aa).

Disordered regions lie at residues 1-23, 36-204, 254-293, 306-384, and 402-428; these read MDSL…RLSP, KESG…KFPL, DCRP…HKSQ, TEVP…PSTL, and GPQP…SCPK. A compositionally biased stretch (basic and acidic residues) spans 44-62; that stretch reads EQDKDPRVQENPGDQRRVP. Positions 106–117 are enriched in low complexity; that stretch reads QTSQTSWTSSCT. 5 stretches are compositionally biased toward polar residues: residues 118–129, 144–155, 260–269, 326–347, and 403–415; these read NRNAISSSYSST, SHCQLTLSSSKT, PSHTLSSLAT, FSSS…QVTS, and PQPQ…RGQN. Residues 416-428 show a composition bias toward low complexity; it reads QRSQTSRTSSCPK.

It belongs to the POM121 family.

In Homo sapiens (Human), this protein is Putative POM121-like protein 1 (POM121L1P).